A 68-amino-acid chain; its full sequence is Serine palmitoyltransferase small subunit A (68 aa).

Residues 1-9 are Cytoplasmic-facing; sequence MAFGDAWKQ. Residues 10-26 form a helical membrane-spanning segment; it reads LSWFYYQYLLVTALYML. Residues 27–31 lie on the Lumenal side of the membrane; that stretch reads EPWER. The chain crosses the membrane as a helical span at residues 32-54; sequence TIFNSLLISVAAMAVYTGYVFMP. The Cytoplasmic portion of the chain corresponds to 55-68; sequence QHIMAILHYFEVVQ.

This sequence belongs to the SPTSS family. SPTSSA subfamily. In terms of assembly, component of the serine palmitoyltransferase (SPT) complex, which is composed of SPTLC1, SPTLC2 or SPTLC3 and SPTSSA or SPTSSB. The heterodimer consisting of SPTLC1 and SPTLC2/SPTLC3 forms the catalytic core of the enzyme, while SPTSSA or SPTSSB subunits determine substrate specificity. SPT also interacts with ORMDL proteins, especially ORMDL3, which negatively regulate SPT activity in the presence of ceramides.

It localises to the endoplasmic reticulum membrane. It participates in lipid metabolism; sphingolipid metabolism. Functionally, component of the serine palmitoyltransferase multisubunit enzyme (SPT) that catalyzes the initial and rate-limiting step in sphingolipid biosynthesis by condensing L-serine and activated acyl-CoA (most commonly palmitoyl-CoA) to form long-chain bases. The SPT complex is composed of SPTLC1, SPTLC2 or SPTLC3 and SPTSSA or SPTSSB. Within this complex, the heterodimer consisting of SPTLC1 and SPTLC2/SPTLC3 forms the catalytic core. Within the SPT complex, SPTSSA stimulates the catalytic activity and plays a role in substrate specificity, which depends upon the overall complex composition. The SPTLC1-SPTLC2-SPTSSA complex shows a strong preference for C16-CoA substrate, while the SPTLC1-SPTLC3-SPTSSA isozyme uses both C14-CoA and C16-CoA as substrates, with a slight preference for C14-CoA. Independently of its action as a SPT component, may be involved in MBOAT7 localization to mitochondria-associated membranes, a membrane bridge between the endoplasmic reticulum and mitochondria, may hence affect MBOAT7-catalyzed incorporation of arachidonic acid into phosphatidylinositol. The sequence is that of Serine palmitoyltransferase small subunit A (sptssa) from Danio rerio (Zebrafish).